The following is a 954-amino-acid chain: Kinesin-like protein KIN-14Q (954 aa).

One can recognise a Calponin-homology (CH) domain in the interval 33–155 (AMRRYDAASW…CVLALKSFSE (123 aa)). The 326-residue stretch at 374–699 (NIRVYCRVRP…LKFAERVASV (326 aa)) folds into the Kinesin motor domain. 457–464 (GQTGSGKT) provides a ligand contact to ATP. Positions 704–733 (AKANKEGSEVRELKEQIATLKAALAKKEGE) form a coiled coil. A compositionally biased stretch (basic and acidic residues) spans 844-855 (YDPDKQRRRAEP). 2 disordered regions span residues 844–876 (YDPDKQRRRAEPVETDDSDSFDAATSSPSDQEM) and 912–954 (PNLA…NTPK). Over residues 864-873 (FDAATSSPSD) the composition is skewed to low complexity. The span at 928–954 (PIRNSKQLPFSTTGGRRTRNGKINTPK) shows a compositional bias: polar residues.

This sequence belongs to the TRAFAC class myosin-kinesin ATPase superfamily. Kinesin family. KIN-14 subfamily. As to quaternary structure, forms oligomers in vitro. Interacts with actin microfilaments. Binds to actin in vitro through its calponin-homology (CH) domain. As to expression, expressed in primary leaf, primary root, developing flower and coleoptile.

The protein localises to the cytoplasm. Its subcellular location is the cytoskeleton. With respect to regulation, the microtubule-dependent ATPase activity is regulated by actin binding. Its function is as follows. Minus end-directed motor protein that transports actin filaments along microtubules. Plays a central role in the polar orientation of actin filaments along microtubules, and thus a contribution to the organization of the cytoskeletal architecture. Links the actin microfilaments with the cortical microtubules in both cycling and non-cycling cells. Required for efficient cell elongation by its participation in the premitotic nuclear positioning. The chain is Kinesin-like protein KIN-14Q from Oryza sativa subsp. japonica (Rice).